Reading from the N-terminus, the 115-residue chain is Large ribosomal subunit protein eL30 (115 aa).

Belongs to the eukaryotic ribosomal protein eL30 family. In terms of assembly, component of the large ribosomal subunit.

The protein localises to the cytoplasm. Its function is as follows. Component of the large ribosomal subunit. The ribosome is a large ribonucleoprotein complex responsible for the synthesis of proteins in the cell. This chain is Large ribosomal subunit protein eL30 (RPL30), found in Gallus gallus (Chicken).